Reading from the N-terminus, the 259-residue chain is GTP-binding protein RHO4 (259 aa).

Residue 59–66 (GDGATGKT) coordinates GTP. An Effector region motif is present at residues 81-89 (YVPTIFENY). GTP-binding positions include 107–111 (DTAGQ) and 165–168 (LKSD). C256 carries the post-translational modification Cysteine methyl ester. C256 is lipidated: S-geranylgeranyl cysteine. Positions 257–259 (VVL) are cleaved as a propeptide — removed in mature form.

The protein belongs to the small GTPase superfamily. Rho family.

The protein localises to the cell membrane. The chain is GTP-binding protein RHO4 (RHO4) from Eremothecium gossypii (strain ATCC 10895 / CBS 109.51 / FGSC 9923 / NRRL Y-1056) (Yeast).